The primary structure comprises 352 residues: Ketol-acid reductoisomerase (NAD(+)) (352 aa).

Positions Glu11–Thr199 constitute a KARI N-terminal Rossmann domain. Residues Tyr38 to Gln41 and Asp100 to Gln103 contribute to the NAD(+) site. The active site involves His124. Residue Gly153 participates in NAD(+) binding. Residues Thr200 to Asn347 enclose the KARI C-terminal knotted domain. Mg(2+)-binding residues include Asp208, Glu212, Glu244, and Glu248. Ser270 is a substrate binding site.

Belongs to the ketol-acid reductoisomerase family. The cofactor is Mg(2+).

It carries out the reaction (2R)-2,3-dihydroxy-3-methylbutanoate + NAD(+) = (2S)-2-acetolactate + NADH + H(+). The protein operates within amino-acid biosynthesis; L-isoleucine biosynthesis; L-isoleucine from 2-oxobutanoate: step 2/4. It participates in amino-acid biosynthesis; L-valine biosynthesis; L-valine from pyruvate: step 2/4. In terms of biological role, involved in the biosynthesis of branched-chain amino acids (BCAA). Catalyzes an alkyl-migration followed by a ketol-acid reduction of (S)-2-acetolactate (S2AL) to yield (R)-2,3-dihydroxy-isovalerate. In the isomerase reaction, S2AL is rearranged via a Mg-dependent methyl migration to produce 3-hydroxy-3-methyl-2-ketobutyrate (HMKB). In the reductase reaction, this 2-ketoacid undergoes a metal-dependent reduction by NADH to yield (R)-2,3-dihydroxy-isovalerate. The sequence is that of Ketol-acid reductoisomerase (NAD(+)) from Desulfosudis oleivorans (strain DSM 6200 / JCM 39069 / Hxd3) (Desulfococcus oleovorans).